Reading from the N-terminus, the 651-residue chain is DNA mismatch repair protein MutL (651 aa).

The protein belongs to the DNA mismatch repair MutL/HexB family.

This protein is involved in the repair of mismatches in DNA. It is required for dam-dependent methyl-directed DNA mismatch repair. May act as a 'molecular matchmaker', a protein that promotes the formation of a stable complex between two or more DNA-binding proteins in an ATP-dependent manner without itself being part of a final effector complex. The sequence is that of DNA mismatch repair protein MutL from Streptococcus mutans serotype c (strain ATCC 700610 / UA159).